The chain runs to 343 residues: 3-hydroxy-3-methylglutaryl-CoA lyase, cytoplasmic (343 aa).

Gly2 is lipidated: N-myristoyl glycine. One can recognise a Pyruvate carboxyltransferase domain in the interval 48 to 315; sequence VKIVEVGPRD…NTGVDLYKVM (268 aa). Residue Arg56 participates in substrate binding. Positions 57, 248, and 250 each coordinate a divalent metal cation. The active site involves Cys281. Asn290 is an a divalent metal cation binding site.

It belongs to the HMG-CoA lyase family. The cofactor is a divalent metal cation.

It localises to the cytoplasm. The protein localises to the cytosol. It is found in the endoplasmic reticulum membrane. It carries out the reaction (3S)-3-hydroxy-3-methylglutaryl-CoA = acetoacetate + acetyl-CoA. The protein operates within metabolic intermediate metabolism; (S)-3-hydroxy-3-methylglutaryl-CoA degradation; acetoacetate from (S)-3-hydroxy-3-methylglutaryl-CoA: step 1/1. Functionally, non-mitochondrial 3-hydroxy-3-methylglutaryl-CoA lyase that catalyzes a cation-dependent cleavage of (S)-3-hydroxy-3-methylglutaryl-CoA into acetyl-CoA and acetoacetate, a key step in ketogenesis, the products of which support energy production in nonhepatic animal tissues. This chain is 3-hydroxy-3-methylglutaryl-CoA lyase, cytoplasmic (Hmgcll1), found in Mus musculus (Mouse).